We begin with the raw amino-acid sequence, 272 residues long: TLC domain-containing protein 4 C (272 aa).

7 consecutive transmembrane segments (helical) span residues 16 to 36 (FSNSLYYRNSIFFSIIFFIIY), 71 to 91 (VSMIHAFLVLPFCIISAVESF), 103 to 123 (SLLMVLSISSGYFIWDLIICY), 128 to 148 (LVGTPMIIHAIMGLSSNIYVA), 155 to 175 (CFVPIVAILLITEISTIPLNM), 196 to 216 (FVITFLVSRCIIGLPFDIYLV), and 233 to 253 (VFITECGIQFFLNSYWSFLLI). The 201-residue stretch at 61–261 (KKKLEWDQRV…LIKKLYQTYL (201 aa)) folds into the TLC domain.

This sequence belongs to the TLCD4 family.

The protein resides in the membrane. In Dictyostelium discoideum (Social amoeba), this protein is TLC domain-containing protein 4 C (tlcd4c).